Here is a 184-residue protein sequence, read N- to C-terminus: Endoribonuclease YbeY (184 aa).

Composition is skewed to acidic residues over residues 1–11 (MTVEVGADENP) and 19–29 (DGAGDESDDED). The disordered stretch occupies residues 1–38 (MTVEVGADENPDFAHDETDGAGDESDDEDAQGRDPELD). 3 residues coordinate Zn(2+): His146, His150, and His156.

It belongs to the endoribonuclease YbeY family. Zn(2+) is required as a cofactor.

The protein localises to the cytoplasm. Its function is as follows. Single strand-specific metallo-endoribonuclease involved in late-stage 70S ribosome quality control and in maturation of the 3' terminus of the 16S rRNA. This Burkholderia pseudomallei (strain K96243) protein is Endoribonuclease YbeY.